Reading from the N-terminus, the 705-residue chain is Probable iron-sulfur-binding oxidoreductase FadF (705 aa).

6 helical membrane-spanning segments follow: residues 4–24 (FLIA…YLFV), 71–91 (IIHV…IDFI), 109–129 (AFTF…GWAF), 146–166 (AGLV…GNGM), 173–193 (HGLS…SGVG), and 199–219 (VIFY…LVYV). 2 4Fe-4S ferredoxin-type domains span residues 268–298 (QSQL…MLSP) and 360–391 (GDVI…VDKI). [4Fe-4S] cluster contacts are provided by cysteine 277, cysteine 280, cysteine 283, cysteine 287, cysteine 371, cysteine 374, cysteine 377, and cysteine 381.

[4Fe-4S] cluster is required as a cofactor.

It localises to the cell membrane. The chain is Probable iron-sulfur-binding oxidoreductase FadF (fadF) from Bacillus subtilis (strain 168).